We begin with the raw amino-acid sequence, 689 residues long: DNA ligase (689 aa).

Residues 40–44 (DSEYD), 89–90 (SL), and Glu121 each bind NAD(+). Lys123 (N6-AMP-lysine intermediate) is an active-site residue. The NAD(+) site is built by Arg144, Glu179, Lys295, and Lys319. Zn(2+) contacts are provided by Cys413, Cys416, Cys431, and Cys437. A BRCT domain is found at 610 to 689 (REQSSLTDKI…EEWLTLIKNV (80 aa)).

The protein belongs to the NAD-dependent DNA ligase family. LigA subfamily. The cofactor is Mg(2+). Mn(2+) is required as a cofactor.

The catalysed reaction is NAD(+) + (deoxyribonucleotide)n-3'-hydroxyl + 5'-phospho-(deoxyribonucleotide)m = (deoxyribonucleotide)n+m + AMP + beta-nicotinamide D-nucleotide.. Its function is as follows. DNA ligase that catalyzes the formation of phosphodiester linkages between 5'-phosphoryl and 3'-hydroxyl groups in double-stranded DNA using NAD as a coenzyme and as the energy source for the reaction. It is essential for DNA replication and repair of damaged DNA. This chain is DNA ligase, found in Rickettsia massiliae (strain Mtu5).